The chain runs to 216 residues: 2,5-diamino-6-ribosylamino-4(3H)-pyrimidinone 5'-phosphate reductase (216 aa).

Residues Thr-51, Asp-55, 79 to 82 (SMAR), Val-126, and 148 to 151 (GSTL) each bind NADP(+).

It belongs to the HTP reductase family. In terms of assembly, homodimer.

The catalysed reaction is 2,5-diamino-6-(1-D-ribitylamino)pyrimidin-4(3H)-one 5'-phosphate + NADP(+) = 2,5-diamino-6-(1-D-ribosylamino)pyrimidin-4(3H)-one 5'-phosphate + NADPH + H(+). It carries out the reaction 2,5-diamino-6-(1-D-ribitylamino)pyrimidin-4(3H)-one 5'-phosphate + NAD(+) = 2,5-diamino-6-(1-D-ribosylamino)pyrimidin-4(3H)-one 5'-phosphate + NADH + H(+). It functions in the pathway cofactor biosynthesis; riboflavin biosynthesis. Its function is as follows. Catalyzes an early step in riboflavin biosynthesis, the NADPH-dependent reduction of the ribose side chain of 2,5-diamino-6-ribosylamino-4(3H)-pyrimidinone 5'-phosphate, yielding 2,5-diamino-6-ribitylamino-4(3H)-pyrimidinone 5'-phosphate. This chain is 2,5-diamino-6-ribosylamino-4(3H)-pyrimidinone 5'-phosphate reductase, found in Methanothermobacter thermautotrophicus (strain ATCC 29096 / DSM 1053 / JCM 10044 / NBRC 100330 / Delta H) (Methanobacterium thermoautotrophicum).